Here is a 343-residue protein sequence, read N- to C-terminus: Membrane progestin receptor delta (343 aa).

Residues Met-1–Thr-49 are Cytoplasmic-facing. A helical transmembrane segment spans residues Val-50–Gly-70. Residues Ser-71 to Tyr-79 lie on the Extracellular side of the membrane. The chain crosses the membrane as a helical span at residues His-80–Ala-100. The Cytoplasmic segment spans residues His-101 to His-112. A helical transmembrane segment spans residues Ile-113–Tyr-133. Over Ala-134–Arg-146 the chain is Extracellular. Residues Leu-147 to Cys-167 traverse the membrane as a helical segment. At Tyr-168 to Asp-216 the chain is on the cytoplasmic side. The chain crosses the membrane as a helical span at residues Ala-217–Ala-237. The Extracellular segment spans residues Ala-238–Gln-257. The chain crosses the membrane as a helical span at residues Leu-258 to Met-278. The Cytoplasmic segment spans residues Gly-279–Thr-291. A helical transmembrane segment spans residues Leu-292–Ile-312. Over Ala-313–Gln-343 the chain is Extracellular.

It belongs to the ADIPOR family. Homodimer.

It localises to the cell membrane. Functionally, plasma membrane progesterone (P4) receptor coupled to G proteins. Seems to act through a G(s) mediated pathway. Involved in neurosteroid inhibition of apoptosis. May be involved in regulating rapid P4 signaling in the nervous system. Also binds dehydroepiandrosterone (DHEA), pregnanolone, pregnenolone and allopregnanolone. The protein is Membrane progestin receptor delta of Mus musculus (Mouse).